The chain runs to 64 residues: Micrurotoxin 1 (64 aa).

5 cysteine pairs are disulfide-bonded: Cys3–Cys24, Cys6–Cys11, Cys17–Cys41, Cys45–Cys57, and Cys58–Cys63.

The protein belongs to the three-finger toxin family. Ancestral subfamily. In terms of tissue distribution, expressed by the venom gland.

The protein localises to the secreted. Allosteric modulator of the GABA(A) receptor (GABR), possibly increasing receptor affinity for the agonist, thus enhancing receptor opening and macroscopic desensitization. In vivo, intracerebroventricular injection into mice results in periods of reduced basal activity, followed by bursts of intense seizures and death. The chain is Micrurotoxin 1 from Micrurus mipartitus (Red-tailed coral snake).